The following is a 152-amino-acid chain: Snaclec anticoagulant protein subunit A (152 aa).

Positions 1–23 are cleaved as a signal peptide; that stretch reads MGRFIFVSFGLLVVYLSLSGTAA. A C-type lectin domain is found at 24–152; the sequence is DCSSSWSSYE…EQRDPFVCEA (129 aa). Cystine bridges form between C25/C36, C53/C150, and C125/C142. Ca(2+) is bound by residues S64, E66, and E70. E151 contributes to the Ca(2+) binding site.

This sequence belongs to the snaclec family. In terms of assembly, heterodimer of subunits A and B; disulfide-linked. As to expression, expressed by the venom gland.

It localises to the secreted. In terms of biological role, anticoagulant protein which binds to the gamma-carboxyglutamic acid-domain regions of factors IX and factor X in the presence of calcium with a 1 to 1 stoichiometry. Also inhibits platelet aggregation by binding to platelet glycoprotein Ibalpha (GP1BA) and functioning as a blocker of vWF. Is devoid of hemorrhagic and lethal activities. Possesses antithrombotic and thrombolytic activities. Also hydrolyzes the Aalpha-chain of fibrinogen. Does not affect the Bbeta-chain and the gamma chain. The protein is Snaclec anticoagulant protein subunit A of Deinagkistrodon acutus (Hundred-pace snake).